The sequence spans 248 residues: uncharacterized protein (248 aa).

Residues 7 to 25 form a helical membrane-spanning segment; that stretch reads TIFIGGIYGLGVYIGAVAW.

This sequence belongs to the methyltransferase superfamily. METL family.

It is found in the mitochondrion inner membrane. Probable methyltransferase. This is an uncharacterized protein from Schizosaccharomyces pombe (strain 972 / ATCC 24843) (Fission yeast).